We begin with the raw amino-acid sequence, 95 residues long: Sec-independent protein translocase protein TatA (95 aa).

The helical transmembrane segment at 1 to 21 (MGGISIWQLLIIALIVVLLFG) threads the bilayer. Residues 50–61 (KALEDNAADKPA) show a composition bias toward basic and acidic residues. Residues 50 to 95 (KALEDNAADKPAADAAKVTETAKVAETAPVAETAEKKAESKGKEQA) form a disordered region. A compositionally biased stretch (low complexity) spans 62–81 (ADAAKVTETAKVAETAPVAE). Positions 82 to 95 (TAEKKAESKGKEQA) are enriched in basic and acidic residues.

This sequence belongs to the TatA/E family. The Tat system comprises two distinct complexes: a TatABC complex, containing multiple copies of TatA, TatB and TatC subunits, and a separate TatA complex, containing only TatA subunits. Substrates initially bind to the TatABC complex, which probably triggers association of the separate TatA complex to form the active translocon.

The protein localises to the cell inner membrane. Part of the twin-arginine translocation (Tat) system that transports large folded proteins containing a characteristic twin-arginine motif in their signal peptide across membranes. TatA could form the protein-conducting channel of the Tat system. This chain is Sec-independent protein translocase protein TatA, found in Shewanella halifaxensis (strain HAW-EB4).